The following is a 156-amino-acid chain: ATP synthase subunit b (156 aa).

The chain crosses the membrane as a helical span at residues 7–27 (LIGQTIAFIVFVWFCMKFVWP).

This sequence belongs to the ATPase B chain family. F-type ATPases have 2 components, F(1) - the catalytic core - and F(0) - the membrane proton channel. F(1) has five subunits: alpha(3), beta(3), gamma(1), delta(1), epsilon(1). F(0) has three main subunits: a(1), b(2) and c(10-14). The alpha and beta chains form an alternating ring which encloses part of the gamma chain. F(1) is attached to F(0) by a central stalk formed by the gamma and epsilon chains, while a peripheral stalk is formed by the delta and b chains.

It localises to the cell inner membrane. In terms of biological role, f(1)F(0) ATP synthase produces ATP from ADP in the presence of a proton or sodium gradient. F-type ATPases consist of two structural domains, F(1) containing the extramembraneous catalytic core and F(0) containing the membrane proton channel, linked together by a central stalk and a peripheral stalk. During catalysis, ATP synthesis in the catalytic domain of F(1) is coupled via a rotary mechanism of the central stalk subunits to proton translocation. Component of the F(0) channel, it forms part of the peripheral stalk, linking F(1) to F(0). This is ATP synthase subunit b from Idiomarina loihiensis (strain ATCC BAA-735 / DSM 15497 / L2-TR).